The chain runs to 81 residues: Putative defensin-like protein 25 (81 aa).

A signal peptide spans 1–23 (MASLKVFSFALILVLTFSVDVEG). 4 cysteine pairs are disulfide-bonded: C33-C81, C43-C68, C52-C77, and C56-C79.

This sequence belongs to the DEFL family.

The protein resides in the secreted. The chain is Putative defensin-like protein 25 from Arabidopsis thaliana (Mouse-ear cress).